The sequence spans 620 residues: Ran-binding protein 10 (620 aa).

The interval 1–34 is disordered; that stretch reads MAAATADPGAGSPQVGDSSGGATGCGLPSPGEQE. Residue A2 is modified to N-acetylalanine. The 188-residue stretch at 35–222 folds into the B30.2/SPRY domain; it reads LSRRLQRLYP…VDANFGQQPF (188 aa). Positions 253-285 constitute a LisH domain; that stretch reads WQAVLQNMVSSYLVHHGYCATATAFARMTETPI. Residues 291 to 348 form the CTLH domain; the sequence is SIKNRQKIQKLVLEGRVGEAIETTQRFYPGLLEHNPNLLFMLKCRQFVEMVNGTDSEV. Positions 347–398 are enriched in polar residues; the sequence is EVRSLSSRSPKSQDSYPGSPSLSPRHGPTSSHTHNTGADSPSCSNGVASTKS. The interval 347-459 is disordered; the sequence is EVRSLSSRSP…TSDSEMEMEA (113 aa). S361 is subject to Phosphoserine. Phosphotyrosine is present on Y362. Residues S365, S367, S369, and S422 each carry the phosphoserine modification. The span at 409 to 436 shows a compositional bias: low complexity; the sequence is SSSSSSSSSSSSSSPSSVNYSESNSTDS. Over residues 437–450 the composition is skewed to polar residues; sequence TKSQPHSSTSNQET. Phosphoserine occurs at positions 451 and 453.

It belongs to the RANBP9/10 family. As to quaternary structure, may form homodimers. Identified in the CTLH complex that contains GID4, RANBP9 and/or RANBP10, MKLN1, MAEA, RMND5A (or alternatively its paralog RMND5B), GID8, ARMC8, WDR26 and YPEL5. Within this complex, MAEA, RMND5A (or alternatively its paralog RMND5B), GID8, WDR26, and RANBP9 and/or RANBP10 form the catalytic core, while GID4, MKLN1, ARMC8 and YPEL5 have ancillary roles. Interacts with RAN and RANBP9. Interacts with the HGF receptor MET. Interacts with AR. Interacts with TUBB1. Interacts with YPEL5. May interact with TUBB5. Interacts with DDX4.

It is found in the cytoplasm. Its subcellular location is the cytosol. The protein resides in the nucleus. Functionally, may act as an adapter protein to couple membrane receptors to intracellular signaling pathways. Core component of the CTLH E3 ubiquitin-protein ligase complex that selectively accepts ubiquitin from UBE2H and mediates ubiquitination and subsequent proteasomal degradation of the transcription factor HBP1. Enhances dihydrotestosterone-induced transactivation activity of AR, as well as dexamethasone-induced transactivation activity of NR3C1, but does not affect estrogen-induced transactivation. Acts as a guanine nucleotide exchange factor (GEF) for RAN GTPase. May play an essential role in hemostasis and in maintaining microtubule dynamics with respect to both platelet shape and function. In Bos taurus (Bovine), this protein is Ran-binding protein 10 (RANBP10).